Here is a 243-residue protein sequence, read N- to C-terminus: Small ribosomal subunit protein uS3 (243 aa).

Residues 39–110 (IRTFIQKKYG…QVRINVVEVE (72 aa)) enclose the KH type-2 domain. Positions 216–243 (QTIPVGASPKRKASRRPQQFEDRSNENS) are disordered. Residues 233–243 (QQFEDRSNENS) are compositionally biased toward basic and acidic residues.

The protein belongs to the universal ribosomal protein uS3 family. As to quaternary structure, part of the 30S ribosomal subunit. Forms a tight complex with proteins S10 and S14.

Its function is as follows. Binds the lower part of the 30S subunit head. Binds mRNA in the 70S ribosome, positioning it for translation. This Prochlorococcus marinus (strain AS9601) protein is Small ribosomal subunit protein uS3.